The sequence spans 200 residues: Protein GrpE (200 aa).

The protein belongs to the GrpE family. As to quaternary structure, homodimer.

Its subcellular location is the cytoplasm. Its function is as follows. Participates actively in the response to hyperosmotic and heat shock by preventing the aggregation of stress-denatured proteins, in association with DnaK and GrpE. It is the nucleotide exchange factor for DnaK and may function as a thermosensor. Unfolded proteins bind initially to DnaJ; upon interaction with the DnaJ-bound protein, DnaK hydrolyzes its bound ATP, resulting in the formation of a stable complex. GrpE releases ADP from DnaK; ATP binding to DnaK triggers the release of the substrate protein, thus completing the reaction cycle. Several rounds of ATP-dependent interactions between DnaJ, DnaK and GrpE are required for fully efficient folding. This chain is Protein GrpE, found in Mycoplasma mycoides subsp. mycoides SC (strain CCUG 32753 / NCTC 10114 / PG1).